We begin with the raw amino-acid sequence, 317 residues long: Ribosomal protein L11 methyltransferase (317 aa).

Residues Thr-158, Gly-179, Asp-201, and Asn-244 each contribute to the S-adenosyl-L-methionine site.

This sequence belongs to the methyltransferase superfamily. PrmA family.

It localises to the cytoplasm. It carries out the reaction L-lysyl-[protein] + 3 S-adenosyl-L-methionine = N(6),N(6),N(6)-trimethyl-L-lysyl-[protein] + 3 S-adenosyl-L-homocysteine + 3 H(+). Its function is as follows. Methylates ribosomal protein L11. The sequence is that of Ribosomal protein L11 methyltransferase from Streptococcus equi subsp. equi (strain 4047).